The sequence spans 509 residues: ATP synthase subunit alpha (509 aa).

169-176 (GDRQTGKT) contributes to the ATP binding site.

This sequence belongs to the ATPase alpha/beta chains family. As to quaternary structure, F-type ATPases have 2 components, CF(1) - the catalytic core - and CF(0) - the membrane proton channel. CF(1) has five subunits: alpha(3), beta(3), gamma(1), delta(1), epsilon(1). CF(0) has four main subunits: a(1), b(1), b'(1) and c(9-12).

The protein localises to the cell inner membrane. The catalysed reaction is ATP + H2O + 4 H(+)(in) = ADP + phosphate + 5 H(+)(out). Functionally, produces ATP from ADP in the presence of a proton gradient across the membrane. The alpha chain is a regulatory subunit. The chain is ATP synthase subunit alpha from Erythrobacter litoralis (strain HTCC2594).